The chain runs to 115 residues: Large ribosomal subunit protein bL19 (115 aa).

Belongs to the bacterial ribosomal protein bL19 family.

Its function is as follows. This protein is located at the 30S-50S ribosomal subunit interface and may play a role in the structure and function of the aminoacyl-tRNA binding site. This is Large ribosomal subunit protein bL19 from Streptococcus suis (strain 98HAH33).